Here is a 106-residue protein sequence, read N- to C-terminus: uncharacterized protein (106 aa).

2 helical membrane-spanning segments follow: residues 46–68 and 73–92; these read LLQEIILFVFCALMVVSAAILAF and AVFIVLQVCVLAVLPILIAA.

The protein resides in the cell membrane. This is an uncharacterized protein from Bacillus subtilis (strain 168).